We begin with the raw amino-acid sequence, 168 residues long: Dihydrofolate reductase (168 aa).

One can recognise a DHFR domain in the interval 1–159 (MISFIFAMDA…YDYEFLMYEK (159 aa)). Substrate is bound at residue 5–7 (IFA). NADP(+)-binding positions include 6–7 (FA) and 14–19 (IGKDND). Asp27 is a substrate binding site. 43–46 (GRKT) is a binding site for NADP(+). Arg57 is a substrate binding site. Residues 62-65 (VTSA) and 95-100 (IGGAQL) each bind NADP(+). Thr114 contributes to the substrate binding site.

It belongs to the dihydrofolate reductase family.

The catalysed reaction is (6S)-5,6,7,8-tetrahydrofolate + NADP(+) = 7,8-dihydrofolate + NADPH + H(+). Its pathway is cofactor biosynthesis; tetrahydrofolate biosynthesis; 5,6,7,8-tetrahydrofolate from 7,8-dihydrofolate: step 1/1. Key enzyme in folate metabolism. Catalyzes an essential reaction for de novo glycine and purine synthesis, and for DNA precursor synthesis. The chain is Dihydrofolate reductase (dfrA) from Bacillus subtilis (strain 168).